The following is a 626-amino-acid chain: Protein MICRORCHIDIA 2 (626 aa).

Residues 579–626 (MRCEEYIKKENETEQTVKSLEKELEEFKSKCAHLALLVDAKKKEMQQA) are a coiled coil.

The protein belongs to the MORC ATPase protein family. As to quaternary structure, homodimer and heterodimer with MORC6. Component of an RNA-directed DNA methylation (RdDM) complex that contains at least MORC6, MORC1/CRT1, MORC2, SWI3D and SUVH9. Binds directly to SUVH9. Mg(2+) serves as cofactor. Requires Mn(2+) as cofactor.

It is found in the nucleus. Its subcellular location is the endosome. Its function is as follows. Mediator of defense signaling triggered by distinct classes of R proteins. Required during hypersensitive response (HR) that confers disease resistance to turnip crinkle virus (TCV). Contributes to resistance against Pseudomonas syringae and Hyaloperonospora arabidopsidis, at early stages prior to cytosolic calcium ions Ca(2+) accumulation. Required for pathogen-associated molecular pattern (PAMP)-triggered immunity, basal resistance, non-host resistance and systemic acquired resistance (SAR). Involved in RNA-directed DNA methylation (RdDM) as a component of the RdDM machinery and required for gene silencing. May also be involved in the regulation of chromatin architecture to maintain gene silencing. Exhibits ATPase activity. This Arabidopsis thaliana (Mouse-ear cress) protein is Protein MICRORCHIDIA 2.